Consider the following 144-residue polypeptide: Large ribosomal subunit protein uL22 (144 aa).

Residues 123–144 (ELVKKRTMGHKKEKAKQKQKQQ) form a disordered region. Basic residues predominate over residues 125-144 (VKKRTMGHKKEKAKQKQKQQ).

This sequence belongs to the universal ribosomal protein uL22 family. In terms of assembly, part of the 50S ribosomal subunit.

Functionally, this protein binds specifically to 23S rRNA; its binding is stimulated by other ribosomal proteins, e.g. L4, L17, and L20. It is important during the early stages of 50S assembly. It makes multiple contacts with different domains of the 23S rRNA in the assembled 50S subunit and ribosome. The globular domain of the protein is located near the polypeptide exit tunnel on the outside of the subunit, while an extended beta-hairpin is found that lines the wall of the exit tunnel in the center of the 70S ribosome. This chain is Large ribosomal subunit protein uL22, found in Mycoplasma genitalium (strain ATCC 33530 / DSM 19775 / NCTC 10195 / G37) (Mycoplasmoides genitalium).